The primary structure comprises 364 residues: Aminomethyltransferase (364 aa).

It belongs to the GcvT family. In terms of assembly, the glycine cleavage system is composed of four proteins: P, T, L and H.

It catalyses the reaction N(6)-[(R)-S(8)-aminomethyldihydrolipoyl]-L-lysyl-[protein] + (6S)-5,6,7,8-tetrahydrofolate = N(6)-[(R)-dihydrolipoyl]-L-lysyl-[protein] + (6R)-5,10-methylene-5,6,7,8-tetrahydrofolate + NH4(+). The glycine cleavage system catalyzes the degradation of glycine. The sequence is that of Aminomethyltransferase from Shewanella baltica (strain OS223).